Consider the following 122-residue polypeptide: Small ribosomal subunit protein uS10y (122 aa).

It belongs to the universal ribosomal protein uS10 family.

In Arabidopsis thaliana (Mouse-ear cress), this protein is Small ribosomal subunit protein uS10y (RPS20B).